The primary structure comprises 64 residues: Large ribosomal subunit protein bL35 (64 aa).

A disordered region spans residues 27-47 (MNGSHNLEKKNRKRSRRLHQA). A compositionally biased stretch (basic residues) spans 36-45 (KNRKRSRRLH).

It belongs to the bacterial ribosomal protein bL35 family.

This Chlorobium phaeobacteroides (strain DSM 266 / SMG 266 / 2430) protein is Large ribosomal subunit protein bL35.